The chain runs to 193 residues: Holliday junction branch migration complex subunit RuvA (193 aa).

The interval 1-64 (MIGRIAGILL…EDANLLYGFL (64 aa)) is domain I. Residues 65-139 (TPQERTTFRE…GKLGADLGEL (75 aa)) form a domain II region. The interval 139-143 (LAGAA) is flexible linker. The interval 144–193 (SPSDHATDILNALLALGYSEKEGLAAIKNVPAGTGVSEGIKLALKALSKV) is domain III.

It belongs to the RuvA family. As to quaternary structure, homotetramer. Forms an RuvA(8)-RuvB(12)-Holliday junction (HJ) complex. HJ DNA is sandwiched between 2 RuvA tetramers; dsDNA enters through RuvA and exits via RuvB. An RuvB hexamer assembles on each DNA strand where it exits the tetramer. Each RuvB hexamer is contacted by two RuvA subunits (via domain III) on 2 adjacent RuvB subunits; this complex drives branch migration. In the full resolvosome a probable DNA-RuvA(4)-RuvB(12)-RuvC(2) complex forms which resolves the HJ.

The protein resides in the cytoplasm. The RuvA-RuvB-RuvC complex processes Holliday junction (HJ) DNA during genetic recombination and DNA repair, while the RuvA-RuvB complex plays an important role in the rescue of blocked DNA replication forks via replication fork reversal (RFR). RuvA specifically binds to HJ cruciform DNA, conferring on it an open structure. The RuvB hexamer acts as an ATP-dependent pump, pulling dsDNA into and through the RuvAB complex. HJ branch migration allows RuvC to scan DNA until it finds its consensus sequence, where it cleaves and resolves the cruciform DNA. This is Holliday junction branch migration complex subunit RuvA from Burkholderia lata (strain ATCC 17760 / DSM 23089 / LMG 22485 / NCIMB 9086 / R18194 / 383).